A 386-amino-acid chain; its full sequence is Acetylornithine aminotransferase (386 aa).

Pyridoxal 5'-phosphate contacts are provided by residues 94-95 (GT) and Phe-121. Arg-124 contacts N(2)-acetyl-L-ornithine. 206–209 (DEVQ) contacts pyridoxal 5'-phosphate. Residue Lys-235 is modified to N6-(pyridoxal phosphate)lysine. Ser-263 is a N(2)-acetyl-L-ornithine binding site. Thr-264 is a pyridoxal 5'-phosphate binding site.

The protein belongs to the class-III pyridoxal-phosphate-dependent aminotransferase family. ArgD subfamily. Homodimer. It depends on pyridoxal 5'-phosphate as a cofactor.

It localises to the cytoplasm. It catalyses the reaction N(2)-acetyl-L-ornithine + 2-oxoglutarate = N-acetyl-L-glutamate 5-semialdehyde + L-glutamate. The protein operates within amino-acid biosynthesis; L-arginine biosynthesis; N(2)-acetyl-L-ornithine from L-glutamate: step 4/4. The polypeptide is Acetylornithine aminotransferase (Listeria monocytogenes serotype 4b (strain F2365)).